The primary structure comprises 527 residues: (3S)-3-amino-3-(3-chloro-4-hydroxyphenyl)propanoyl-[peptidyl-carrier protein SgcC2] monooxygenase (527 aa).

Basic and acidic residues predominate over residues 1-10 (MPHGAEREAS). The tract at residues 1–22 (MPHGAEREASPAEESAGTRPLT) is disordered. FAD contacts are provided by residues 161-163 (HAF), 167-170 (PVDR), and Thr-202.

The protein belongs to the FADH(2)-utilizing monooxygenase family. Homotetramer.

It catalyses the reaction (3S)-3-amino-3-(3-chloro-4-hydroxyphenyl)propanoyl-[SgcC2 peptidyl-carrier protein] + FADH2 + O2 = (3S)-3-amino-3-(3-chloro-4,5-dihydroxyphenyl)propanoyl-[SgcC2 peptidyl-carrier protein] + FAD + H2O + H(+). It participates in antibiotic biosynthesis. With respect to regulation, the SgcE6-SgcC hydroxylation activity decreases in the presence of excess FAD. Functionally, oxygenase component of a two-component system involved in the biosynthesis of the enediyne antitumor antibiotic C-1027. Uses FADH(2) supplied by SgcE6 to catalyze the C-5 hydroxylation of (S)-3-chloro-beta-tyrosyl-S-SgcC2. Can also efficiently catalyze the regioselective hydroxylation of other 3-substituted beta-tyrosyl-S-SgcC2 analogs, including the bromo-, iodo-, fluoro-, and methyl-substituted analogs, but does not accept 3-hydroxy-beta-tyrosyl-S-SgcC2 as a substrate. Is only active with SgcC2 (peptidyl carrier protein)-tethered substrates. The chain is (3S)-3-amino-3-(3-chloro-4-hydroxyphenyl)propanoyl-[peptidyl-carrier protein SgcC2] monooxygenase from Streptomyces globisporus.